We begin with the raw amino-acid sequence, 248 residues long: 2,3-bisphosphoglycerate-dependent phosphoglycerate mutase (248 aa).

Substrate contacts are provided by residues 8-15 (RHGESEWN), 21-22 (TG), Arg-60, 87-90 (ERHY), Lys-98, 114-115 (RR), and 183-184 (GN). His-9 serves as the catalytic Tele-phosphohistidine intermediate. Residue Glu-87 is the Proton donor/acceptor of the active site.

Belongs to the phosphoglycerate mutase family. BPG-dependent PGAM subfamily.

The enzyme catalyses (2R)-2-phosphoglycerate = (2R)-3-phosphoglycerate. It participates in carbohydrate degradation; glycolysis; pyruvate from D-glyceraldehyde 3-phosphate: step 3/5. Functionally, catalyzes the interconversion of 2-phosphoglycerate and 3-phosphoglycerate. The sequence is that of 2,3-bisphosphoglycerate-dependent phosphoglycerate mutase from Borreliella afzelii (strain PKo) (Borrelia afzelii).